The following is a 609-amino-acid chain: Replication protein A 70 kDa DNA-binding subunit (609 aa).

The disordered stretch occupies residues 113-163; it reads GNPQPYNDGQPQPAAPAPASAPAPAPSKLQNNSAPPPSMNRGTSKLFGGGS. Over residues 125–137 the composition is skewed to pro residues; it reads PAAPAPASAPAPA. Residues 188–272 constitute a DNA-binding region (OB); sequence WTVRARVTNK…VKNDYEMTFN (85 aa). Residues 472-494 form a C4-type zinc finger; that stretch reads CPSQDCNKKVIDQQNGLFRCEKC.

This sequence belongs to the replication factor A protein 1 family. In terms of assembly, component of the heterotrimeric canonical replication protein A complex (RPA). Interacts with rpain-a.

The protein resides in the nucleus. It is found in the PML body. Its function is as follows. As part of the heterotrimeric replication protein A complex (RPA/RP-A), binds and stabilizes single-stranded DNA intermediates, that form during DNA replication or upon DNA stress. It prevents their reannealing and in parallel, recruits and activates different proteins and complexes involved in DNA metabolism. Thereby, it plays an essential role both in DNA replication and the cellular response to DNA damage. In Xenopus laevis (African clawed frog), this protein is Replication protein A 70 kDa DNA-binding subunit (rpa1).